The sequence spans 384 residues: uncharacterized protein (384 aa).

A run of 10 helical transmembrane segments spans residues 11-31, 33-53, 66-86, 94-114, 153-173, 197-217, 224-244, 284-304, 309-329, and 342-362; these read LWFI…GISI, WMIG…AWLM, LALG…LSVL, FSVG…GYVL, LVQM…VILI, LAPV…CKAA, APWL…GAAV, IIIV…LSAV, LTGI…IAEM, and FVVA…PPFY.

The protein belongs to the AbrB family.

The protein resides in the cell membrane. This is an uncharacterized protein from Bacillus subtilis (strain 168).